The following is a 221-amino-acid chain: Probable GTP-binding protein EngB (221 aa).

One can recognise an EngB-type G domain in the interval 32-205 (GIPQIAFAGR…RKIVDSLITT (174 aa)). GTP is bound by residues 40–47 (GRSNAGKS), 67–71 (GKTKL), 85–88 (DLPG), 152–155 (TKID), and 184–186 (VSN). Mg(2+) contacts are provided by Ser47 and Thr69.

Belongs to the TRAFAC class TrmE-Era-EngA-EngB-Septin-like GTPase superfamily. EngB GTPase family. Mg(2+) is required as a cofactor.

Necessary for normal cell division and for the maintenance of normal septation. In Leptospira borgpetersenii serovar Hardjo-bovis (strain JB197), this protein is Probable GTP-binding protein EngB.